Consider the following 418-residue polypeptide: Putative methylthiotransferase jhp_0270 (418 aa).

The MTTase N-terminal domain maps to 2–110; it reads KKVYFKTFGC…INALLQEKKR (109 aa). Residues Cys-11, Cys-45, Cys-74, Cys-144, Cys-148, and Cys-151 each contribute to the [4Fe-4S] cluster site. A Radical SAM core domain is found at 130 to 355; that stretch reads FVGKTRAFIK…KDLIFHKNKA (226 aa).

It belongs to the methylthiotransferase family. [4Fe-4S] cluster serves as cofactor.

In Helicobacter pylori (strain J99 / ATCC 700824) (Campylobacter pylori J99), this protein is Putative methylthiotransferase jhp_0270.